Here is a 264-residue protein sequence, read N- to C-terminus: AA9 family lytic polysaccharide monooxygenase A (264 aa).

An N-terminal signal peptide occupies residues 1–18; that stretch reads MHFAALAILSSLVASAAA. Residue H19 coordinates Cu(2+). N-linked (GlcNAc...) asparagine glycans are attached at residues N51 and N75. A disulfide bridge connects residues C59 and C182. Residue H96 coordinates Cu(2+). An N-linked (GlcNAc...) asparagine glycan is attached at N110. O2 is bound at residue H162. Y179 contacts Cu(2+). 2 N-linked (GlcNAc...) asparagine glycosylation sites follow: N218 and N251.

The protein belongs to the polysaccharide monooxygenase AA9 family. The cofactor is Cu(2+).

Its subcellular location is the secreted. The enzyme catalyses [(1-&gt;4)-beta-D-glucosyl]n+m + reduced acceptor + O2 = 4-dehydro-beta-D-glucosyl-[(1-&gt;4)-beta-D-glucosyl]n-1 + [(1-&gt;4)-beta-D-glucosyl]m + acceptor + H2O.. In terms of biological role, lytic polysaccharide monooxygenase (LPMO) that depolymerizes crystalline and amorphous polysaccharides via the oxidation of scissile alpha- or beta-(1-4)-glycosidic bonds, yielding C4 oxidation products. Catalysis by LPMOs requires the reduction of the active-site copper from Cu(II) to Cu(I) by a reducing agent and H(2)O(2) or O(2) as a cosubstrate. Active on cellulose and cello-oligosaccharides, as well as plant cell wall-derived hemicellulosic polysaccharides. Also active on cello-oligosaccharides such as cellohexaose, cellopentaose or cellotetraose. This Phanerochaete carnosa (strain HHB-10118-sp) (White-rot fungus) protein is AA9 family lytic polysaccharide monooxygenase A.